Reading from the N-terminus, the 457-residue chain is MITLIFISIGMTLTSFVVSKNNLWPVTILQSAFLSIAAIALINNHWISKWHNFINSVDSMQLPLLVLSCWLTPLALIASKGHLNNLPITNQRTFIVLVIIITTSLIITFSSLELILFYIAFETTLVPTLILITRWGALMERFQAGLYFIFYTLFGSLPLLISLIALYFSSNSLSIPNVELVWLTTNSSTSLTVWWLLSILAFLVKMPIYGFHLWLPKAHVEAPVAGSMILAAILLKLGGYGLMRLISLFSTTSLNFSSLPLVVFCCWGALVTSIICIRQTDLKALIAYSSVGHMSIVAAGVFSQTIWGINGALMLMIAHGLVSSALFALANTMYERSGTRTLVITRGMKLILPLSTFWWLIMCAANLGFPYSNLIGEILYISWYGWSIWCSYFSNYNCVWGVYSLMIFQVSQQGPSSHFLLNVPTSFSREHLLFLLHLLPLLLIIPTPNLVLISWLK.

12 helical membrane-spanning segments follow: residues 22 to 42, 59 to 79, 95 to 115, 116 to 136, 148 to 168, 191 to 211, 223 to 243, 257 to 277, 282 to 302, 309 to 329, 350 to 370, and 433 to 453; these read NLWP…IALI, SMQL…LIAS, IVLV…LELI, LFYI…TRWG, FIFY…ALYF, LTVW…IYGF, PVAG…YGLM, SSLP…IICI, LKAL…AGVF, INGA…LFAL, LILP…LGFP, and LFLL…LVLI.

It belongs to the complex I subunit 4 family.

It is found in the mitochondrion membrane. It catalyses the reaction a ubiquinone + NADH + 5 H(+)(in) = a ubiquinol + NAD(+) + 4 H(+)(out). Its function is as follows. Core subunit of the mitochondrial membrane respiratory chain NADH dehydrogenase (Complex I) that is believed to belong to the minimal assembly required for catalysis. Complex I functions in the transfer of electrons from NADH to the respiratory chain. The immediate electron acceptor for the enzyme is believed to be ubiquinone. In Arbacia lixula (Black urchin), this protein is NADH-ubiquinone oxidoreductase chain 4 (ND4).